The following is a 252-amino-acid chain: 5-oxoprolinase subunit A (252 aa).

The protein belongs to the LamB/PxpA family. As to quaternary structure, forms a complex composed of PxpA, PxpB and PxpC.

It carries out the reaction 5-oxo-L-proline + ATP + 2 H2O = L-glutamate + ADP + phosphate + H(+). Its function is as follows. Catalyzes the cleavage of 5-oxoproline to form L-glutamate coupled to the hydrolysis of ATP to ADP and inorganic phosphate. The protein is 5-oxoprolinase subunit A of Chloroflexus aggregans (strain MD-66 / DSM 9485).